The following is a 261-amino-acid chain: Large ribosomal subunit protein uL3 (261 aa).

A compositionally biased stretch (low complexity) spans 138–148 (SVSHRSHGSTG). Disordered regions lie at residues 138-163 (SVSH…KKMA) and 214-261 (ADAP…GDQA). Glutamine 151 bears the N5-methylglutamine mark. Residues 227–261 (APTPVEAAADEAAPAEEPAVTEAPAAEATEAGDQA) are compositionally biased toward low complexity.

It belongs to the universal ribosomal protein uL3 family. In terms of assembly, part of the 50S ribosomal subunit. Forms a cluster with proteins L14 and L19. Post-translationally, methylated by PrmB.

Its function is as follows. One of the primary rRNA binding proteins, it binds directly near the 3'-end of the 23S rRNA, where it nucleates assembly of the 50S subunit. In Phenylobacterium zucineum (strain HLK1), this protein is Large ribosomal subunit protein uL3.